A 650-amino-acid chain; its full sequence is Fructose-1,6-bisphosphatase class 3 (650 aa).

This sequence belongs to the FBPase class 3 family. Requires Mn(2+) as cofactor.

The catalysed reaction is beta-D-fructose 1,6-bisphosphate + H2O = beta-D-fructose 6-phosphate + phosphate. It participates in carbohydrate biosynthesis; gluconeogenesis. This is Fructose-1,6-bisphosphatase class 3 from Finegoldia magna (strain ATCC 29328 / DSM 20472 / WAL 2508) (Peptostreptococcus magnus).